The primary structure comprises 317 residues: Serpentine receptor class delta-46 (317 aa).

The next 7 helical transmembrane spans lie at 9–29 (FYII…YVII), 42–62 (IFLC…LLQA), 91–111 (YVLC…TMYV), 129–149 (VIIL…YLTI), 185–205 (QIVF…MFCL), 239–259 (AFLP…ALIT), and 269–289 (FVSV…FYTV).

It belongs to the nematode receptor-like protein srd family.

The protein localises to the membrane. In Caenorhabditis elegans, this protein is Serpentine receptor class delta-46 (srd-46).